The chain runs to 284 residues: Ribosomal RNA small subunit methyltransferase A (284 aa).

6 residues coordinate S-adenosyl-L-methionine: Asn-27, Leu-29, Gly-54, Glu-75, Asp-100, and Asn-125.

This sequence belongs to the class I-like SAM-binding methyltransferase superfamily. rRNA adenine N(6)-methyltransferase family. RsmA subfamily.

It localises to the cytoplasm. It carries out the reaction adenosine(1518)/adenosine(1519) in 16S rRNA + 4 S-adenosyl-L-methionine = N(6)-dimethyladenosine(1518)/N(6)-dimethyladenosine(1519) in 16S rRNA + 4 S-adenosyl-L-homocysteine + 4 H(+). Its function is as follows. Specifically dimethylates two adjacent adenosines (A1518 and A1519) in the loop of a conserved hairpin near the 3'-end of 16S rRNA in the 30S particle. May play a critical role in biogenesis of 30S subunits. This is Ribosomal RNA small subunit methyltransferase A from Protochlamydia amoebophila (strain UWE25).